The chain runs to 368 residues: Zinc finger protein 24 (368 aa).

K22 is covalently cross-linked (Glycyl lysine isopeptide (Lys-Gly) (interchain with G-Cter in SUMO2)). Residue K27 forms a Glycyl lysine isopeptide (Lys-Gly) (interchain with G-Cter in SUMO1); alternate linkage. K27 is covalently cross-linked (Glycyl lysine isopeptide (Lys-Gly) (interchain with G-Cter in SUMO2); alternate). The SCAN box domain maps to R52–L134. Residues S132 and S142 each carry the phosphoserine modification. Glycyl lysine isopeptide (Lys-Gly) (interchain with G-Cter in SUMO2) cross-links involve residues K147, K177, and K236. The segment at H251–H273 adopts a C2H2-type 1 zinc-finger fold. Residues H251 to H301 are necessary and sufficient for nuclear localization. S274 is subject to Phosphoserine. Residues K277 and K286 each participate in a glycyl lysine isopeptide (Lys-Gly) (interchain with G-Cter in SUMO2) cross-link. C2H2-type zinc fingers lie at residues Y279–H301, Y307–H329, and Y335–H357. The residue at position 292 (S292) is a Phosphoserine. Y335 carries the phosphotyrosine modification. Glycyl lysine isopeptide (Lys-Gly) (interchain with G-Cter in SUMO2) cross-links involve residues K361 and K367.

It belongs to the krueppel C2H2-type zinc-finger protein family. Sumoylated.

The protein localises to the nucleus. Transcription factor required for myelination of differentiated oligodendrocytes. Required for the conversion of oligodendrocytes from the premyelinating to the myelinating state. In the developing central nervous system (CNS), involved in the maintenance in the progenitor stage by promoting the cell cycle. Specifically binds to the 5'-TCAT-3' DNA sequence. Has transcription repressor activity in vitro. This chain is Zinc finger protein 24 (ZNF24), found in Pan paniscus (Pygmy chimpanzee).